Here is a 1507-residue protein sequence, read N- to C-terminus: Nonribosomal peptide synthetase ataP (1507 aa).

A Carrier 1 domain is found at 1-72; that stretch reads MQINIRNEIA…DIISRSTGMY (72 aa). At S33 the chain carries O-(pantetheine 4'-phosphoryl)serine. Residues 98–119 form a disordered region; the sequence is TPSPSPSGPSTGCPTPDTLDTT. Residues 105 to 115 show a composition bias toward low complexity; the sequence is GPSTGCPTPDT. The tract at residues 163–429 is condensation 1; it reads TRMAWQQVLE…NRVFRQLVQL (267 aa). The adenylation stretch occupies residues 514–893; that stretch reads AAAENPEACA…GRNDRQIKLR (380 aa). The 78-residue stretch at 988–1065 folds into the Carrier 2 domain; sequence NEMSPTEQRV…DLSQRIDKLQ (78 aa). Position 1025 is an O-(pantetheine 4'-phosphoryl)serine (S1025). Positions 1099-1471 are condensation 2; it reads TSNTSFTVSF…MTALRLLIKN (373 aa).

It belongs to the NRP synthetase family.

Its pathway is mycotoxin biosynthesis. Its function is as follows. Nonribosomal peptide synthetase; part of the gene cluster that mediates the biosynthesis of acetylaranotin, a member of the epipolythiodioxopiperazine (ETP) class of toxins characterized by a disulfide-bridged cyclic dipeptide. The first step of acetylaranotin biosynthesis is performed by the NRPS ataP which produces diketopiperazine cyclo-L-Phe-L-Phe via the condensation of 2 phenylalanines (L-Phe). The ataC domain of ataTC then catalyzes the formation of bishydroxylation of cyclo-L-Phe-L-Phe. The glutathione S-transferase domain ataG in ataIMG further catalyzes the conjugation of two glutathiones to the bishydroxylated intermediate. Next, the dipeptidase ataJ removes the Glu residues. The following step is performed by the carbon sulfur lyase domain ataI of ataIMG which may convert the bis-cysteinyl adduct to yield an epidithiol intermediate. The ataT domain from ataTC then catalyzes the oxidation of the free dithiols, followed by a cyclization step catalyzed by the cytochrome P450 ataF. AtaF probably acts as an epoxidase to promote a dual epoxidation formation at C8 and C9 along with C8' and C9', followed by the spontaneous nucleophilic attack of the amide nitrogens N10 and N10' to yield an intermediate with the pyrrolidine partial structure. The final steps of acetylaranotin biosynthesis involve the acetylation and ring rearrangement of an epitetrathiodiketopiperazine intermediate to produce acetylaranotin. AtaH probably catalyzes the acetylation of epitetrathiodiketopiperazine to produce a diacetate and ataY is responsible for the formation of the dihydrooxepin moiety that converts the diacetate intermediate to acetylaranotin via acetylapoaranotin. Both enzymes could function independently in the absence of the other. The acetylaranotin bis-thiomethyltransferase ataS located outside of acetylaranotin gene cluster is the main thiomethyltransferase responsible for converting acetylaranotin and its related intermediates to their methylated forms. The protein is Nonribosomal peptide synthetase ataP of Aspergillus terreus (strain NIH 2624 / FGSC A1156).